The following is a 383-amino-acid chain: 3-phytase (383 aa).

Residues 1–26 form the signal peptide; it reads MNHSKTLLLTAAAGLMLTCGAVSSQA. A propeptide spanning residues 27–30 is cleaved from the precursor; it reads KHKL. One can recognise a BPP domain in the interval 31–362; the sequence is SDPYHFTVNA…VPWERIADKI (332 aa). The disordered stretch occupies residues 364–383; it reads FHPQVNKQVDPRKMTDRSGK. Positions 372 to 383 are enriched in basic and acidic residues; the sequence is VDPRKMTDRSGK.

Its subcellular location is the secreted. It catalyses the reaction 1D-myo-inositol hexakisphosphate + H2O = 1D-myo-inositol 1,2,4,5,6-pentakisphosphate + phosphate. In Bacillus sp. (strain DS11), this protein is 3-phytase (phy).